The primary structure comprises 200 residues: Ependymin-related protein 1 (200 aa).

The signal sequence occupies residues 1 to 17 (MILQAALFLAGLTVVSG). 3 N-linked (GlcNAc...) asparagine glycosylation sites follow: Asn-36, Asn-124, and Asn-136.

The protein belongs to the ependymin family. As to expression, component of the acid-soluble and acid-insoluble organic matrix of prismatic shell layers (at protein level). Expressed discontinuously in the anterior zone of the outer fold of the mantle where its expression correlates with shell pigmentation.

Its subcellular location is the secreted. The sequence is that of Ependymin-related protein 1 from Haliotis asinina (Donkey's ear abalone).